Reading from the N-terminus, the 577-residue chain is Acyl-coenzyme A synthetase ACSM2B, mitochondrial (577 aa).

A mitochondrion-targeting transit peptide spans 1–46; the sequence is MHWLRKVQGLCTLWGTQMSSRTLYINSRQLVSLQWGHQEVPAKFNF. Gln-139 is a binding site for CoA. ATP contacts are provided by residues 221–229, 359–364, Asp-446, and Arg-461; these read TSGTSGLPK and EFYGQT. Residue Thr-364 coordinates substrate. CoA is bound at residue 469-471; the sequence is SGY. Residue Arg-472 coordinates substrate. Residue Arg-501 participates in CoA binding. Ser-513 carries the phosphoserine modification. Residues Lys-532 and 540–542 each bind CoA; that span reads YPR. Lys-557 is an ATP binding site.

This sequence belongs to the ATP-dependent AMP-binding enzyme family. Monomer. Mg(2+) is required as a cofactor. Mn(2+) serves as cofactor. In terms of tissue distribution, detected in liver.

The protein localises to the mitochondrion. It catalyses the reaction a medium-chain fatty acid + ATP + CoA = a medium-chain fatty acyl-CoA + AMP + diphosphate. The catalysed reaction is benzoate + ATP + CoA = benzoyl-CoA + AMP + diphosphate. The enzyme catalyses hexanoate + ATP + CoA = hexanoyl-CoA + AMP + diphosphate. It carries out the reaction butanoate + ATP + CoA = butanoyl-CoA + AMP + diphosphate. It catalyses the reaction octanoate + ATP + CoA = octanoyl-CoA + AMP + diphosphate. The catalysed reaction is decanoate + ATP + CoA = decanoyl-CoA + AMP + diphosphate. Activated by monovalent cations, such as potassium, rubidium or ammonium. In terms of biological role, catalyzes the activation of fatty acids by CoA to produce an acyl-CoA, the first step in fatty acid metabolism. Capable of activating medium-chain fatty acids (e.g. butyric (C4) to decanoic (C10) acids), and certain carboxylate-containing xenobiotics, e.g. benzoate. This is Acyl-coenzyme A synthetase ACSM2B, mitochondrial (ACSM2B) from Homo sapiens (Human).